Reading from the N-terminus, the 63-residue chain is MPKMKSVKGAVKRFKVKKNGTVKRGTAFRSHILTKQDPQTRTTQHKSKIIAKVDEKNVKAMIN.

The protein belongs to the bacterial ribosomal protein bL35 family.

The chain is Large ribosomal subunit protein bL35 from Sulfurimonas denitrificans (strain ATCC 33889 / DSM 1251) (Thiomicrospira denitrificans (strain ATCC 33889 / DSM 1251)).